A 182-amino-acid polypeptide reads, in one-letter code: uncharacterized protein (182 aa).

Disordered stretches follow at residues 1–73 and 105–182; these read MMSG…YRSL and SMST…HLNR. 2 stretches are compositionally biased toward low complexity: residues 43 to 68 and 105 to 121; these read RPSPFLSPSSSSSQTSISPTPTETSS and SMSTLELSSSTLSSPVT. Residues 122–131 show a composition bias toward pro residues; the sequence is APAPPPPPTS.

This is an uncharacterized protein from Caenorhabditis elegans.